Here is a 186-residue protein sequence, read N- to C-terminus: Ribosome-recycling factor (186 aa).

The protein belongs to the RRF family.

It is found in the cytoplasm. In terms of biological role, responsible for the release of ribosomes from messenger RNA at the termination of protein biosynthesis. May increase the efficiency of translation by recycling ribosomes from one round of translation to another. The chain is Ribosome-recycling factor from Chlorobium phaeovibrioides (strain DSM 265 / 1930) (Prosthecochloris vibrioformis (strain DSM 265)).